Here is a 95-residue protein sequence, read N- to C-terminus: UPF0132 membrane protein AF_0736 (95 aa).

3 helical membrane passes run 2–22 (CYTLGFVTGVLFLLFDRSPFV), 32–52 (TFSTITALVILLPVLPGGALL), and 55–75 (VVMAFSIILWAFCIVKASRGE).

It belongs to the UPF0132 family.

The protein localises to the cell membrane. This Archaeoglobus fulgidus (strain ATCC 49558 / DSM 4304 / JCM 9628 / NBRC 100126 / VC-16) protein is UPF0132 membrane protein AF_0736.